The primary structure comprises 549 residues: Probable protein kinase UbiB (549 aa).

In terms of domain architecture, Protein kinase spans 123–501; the sequence is NFDDTPLASA…QQKAHKSNYL (379 aa). Residues 129–137 and Lys152 contribute to the ATP site; that span reads LASASISQV. Asp287 acts as the Proton acceptor in catalysis. Helical transmembrane passes span 498–518 and 520–540; these read SNYL…LFSQ and ATLW…LLGW.

The protein belongs to the ABC1 family. UbiB subfamily.

It is found in the cell inner membrane. Its pathway is cofactor biosynthesis; ubiquinone biosynthesis [regulation]. Functionally, is probably a protein kinase regulator of UbiI activity which is involved in aerobic coenzyme Q (ubiquinone) biosynthesis. This is Probable protein kinase UbiB from Shewanella loihica (strain ATCC BAA-1088 / PV-4).